The following is a 1216-amino-acid chain: Coatomer subunit alpha-1 (1216 aa).

8 WD repeats span residues 7–48, 49–88, 91–132, 133–172, 202–241, 246–285, 288–326, and 363–404; these read TKSN…DRFD, EHEG…CLFT, GHLD…SVLT, GHNH…KKTV, GHDR…AWEV, GHMN…GLQT, REHD…PAFA, and SLNQ…VGRS.

As to quaternary structure, oligomeric complex that consists of at least the alpha, beta, beta', gamma, delta, epsilon and zeta subunits.

The protein localises to the cytoplasm. It is found in the golgi apparatus membrane. It localises to the cytoplasmic vesicle. Its subcellular location is the COPI-coated vesicle membrane. In terms of biological role, the coatomer is a cytosolic protein complex that binds to dilysine motifs and reversibly associates with Golgi non-clathrin-coated vesicles, which further mediate biosynthetic protein transport from the ER, via the Golgi up to the trans Golgi network. Coatomer complex is required for budding from Golgi membranes, and is essential for the retrograde Golgi-to-ER transport of dilysine-tagged proteins. This Arabidopsis thaliana (Mouse-ear cress) protein is Coatomer subunit alpha-1.